The sequence spans 441 residues: Coiled-coil domain-containing protein 91 (441 aa).

The segment at 1 to 16 (MDDDDFGGFEAAETFD) is GGA1-binding motif. A disordered region spans residues 1 to 26 (MDDDDFGGFEAAETFDGGSGETQTTS). Ser-43 and Ser-46 each carry phosphoserine. 2 coiled-coil regions span residues 130-209 (SNIQ…GHEA) and 249-407 (ELLN…KRLD). The homodimerization stretch occupies residues 210 to 413 (LSIIVDEYKA…KRLDQVIRQR (204 aa)).

Homodimer. Interacts with GGA1, GGA2 and AP1G1. Widely expressed.

The protein resides in the membrane. It is found in the golgi apparatus. Its subcellular location is the trans-Golgi network membrane. It localises to the trans-Golgi network. In terms of biological role, involved in the regulation of membrane traffic through the trans-Golgi network (TGN). Functions in close cooperation with the GGAs in the sorting of hydrolases to lysosomes. This Homo sapiens (Human) protein is Coiled-coil domain-containing protein 91 (CCDC91).